A 463-amino-acid chain; its full sequence is uncharacterized protein (463 aa).

In terms of domain architecture, HTH gntR-type spans 13 to 81 (IPLYQQLYRY…PRSGWFADYH (69 aa)). A DNA-binding region (H-T-H motif) is located at residues 41-60 (KRLLANQLSISQTTVERAYE). Lysine 308 bears the N6-(pyridoxal phosphate)lysine mark.

The protein in the C-terminal section; belongs to the class-I pyridoxal-phosphate-dependent aminotransferase family. It depends on pyridoxal 5'-phosphate as a cofactor.

This is an uncharacterized protein from Bacillus subtilis (strain 168).